A 232-amino-acid polypeptide reads, in one-letter code: Large ribosomal subunit protein uL1 (232 aa).

Belongs to the universal ribosomal protein uL1 family. In terms of assembly, part of the 50S ribosomal subunit.

In terms of biological role, binds directly to 23S rRNA. The L1 stalk is quite mobile in the ribosome, and is involved in E site tRNA release. Protein L1 is also a translational repressor protein, it controls the translation of the L11 operon by binding to its mRNA. The polypeptide is Large ribosomal subunit protein uL1 (Burkholderia ambifaria (strain MC40-6)).